Consider the following 562-residue polypeptide: Dihydroxy-acid dehydratase (562 aa).

Mg(2+) is bound at residue aspartate 80. Position 121 (cysteine 121) interacts with [2Fe-2S] cluster. Residues aspartate 122 and lysine 123 each contribute to the Mg(2+) site. Lysine 123 carries the post-translational modification N6-carboxylysine. Residue cysteine 194 participates in [2Fe-2S] cluster binding. Glutamate 446 contacts Mg(2+). Serine 472 acts as the Proton acceptor in catalysis.

It belongs to the IlvD/Edd family. In terms of assembly, homodimer. It depends on [2Fe-2S] cluster as a cofactor. Mg(2+) serves as cofactor.

The enzyme catalyses (2R)-2,3-dihydroxy-3-methylbutanoate = 3-methyl-2-oxobutanoate + H2O. The catalysed reaction is (2R,3R)-2,3-dihydroxy-3-methylpentanoate = (S)-3-methyl-2-oxopentanoate + H2O. It participates in amino-acid biosynthesis; L-isoleucine biosynthesis; L-isoleucine from 2-oxobutanoate: step 3/4. The protein operates within amino-acid biosynthesis; L-valine biosynthesis; L-valine from pyruvate: step 3/4. Its function is as follows. Functions in the biosynthesis of branched-chain amino acids. Catalyzes the dehydration of (2R,3R)-2,3-dihydroxy-3-methylpentanoate (2,3-dihydroxy-3-methylvalerate) into 2-oxo-3-methylpentanoate (2-oxo-3-methylvalerate) and of (2R)-2,3-dihydroxy-3-methylbutanoate (2,3-dihydroxyisovalerate) into 2-oxo-3-methylbutanoate (2-oxoisovalerate), the penultimate precursor to L-isoleucine and L-valine, respectively. The sequence is that of Dihydroxy-acid dehydratase from Staphylococcus epidermidis (strain ATCC 35984 / DSM 28319 / BCRC 17069 / CCUG 31568 / BM 3577 / RP62A).